Reading from the N-terminus, the 208-residue chain is Protein-L-isoaspartate O-methyltransferase (208 aa).

Ser59 is a catalytic residue.

The protein belongs to the methyltransferase superfamily. L-isoaspartyl/D-aspartyl protein methyltransferase family.

The protein localises to the cytoplasm. The enzyme catalyses [protein]-L-isoaspartate + S-adenosyl-L-methionine = [protein]-L-isoaspartate alpha-methyl ester + S-adenosyl-L-homocysteine. Its function is as follows. Catalyzes the methyl esterification of L-isoaspartyl residues in peptides and proteins that result from spontaneous decomposition of normal L-aspartyl and L-asparaginyl residues. It plays a role in the repair and/or degradation of damaged proteins. The polypeptide is Protein-L-isoaspartate O-methyltransferase (Citrobacter koseri (strain ATCC BAA-895 / CDC 4225-83 / SGSC4696)).